Here is a 122-residue protein sequence, read N- to C-terminus: UPF0102 protein xcc-b100_3645 (122 aa).

The protein belongs to the UPF0102 family.

The polypeptide is UPF0102 protein xcc-b100_3645 (Xanthomonas campestris pv. campestris (strain B100)).